The primary structure comprises 274 residues: Light-independent protochlorophyllide reductase iron-sulfur ATP-binding protein (274 aa).

ATP is bound by residues 12-17 and Lys41; that span reads GIGKST. Ser16 contacts Mg(2+). Positions 97 and 131 each coordinate [4Fe-4S] cluster.

This sequence belongs to the NifH/BchL/ChlL family. As to quaternary structure, homodimer. Protochlorophyllide reductase is composed of three subunits; BchL, BchN and BchB. Requires [4Fe-4S] cluster as cofactor.

It catalyses the reaction chlorophyllide a + oxidized 2[4Fe-4S]-[ferredoxin] + 2 ADP + 2 phosphate = protochlorophyllide a + reduced 2[4Fe-4S]-[ferredoxin] + 2 ATP + 2 H2O. Its pathway is porphyrin-containing compound metabolism; bacteriochlorophyll biosynthesis (light-independent). Its function is as follows. Component of the dark-operative protochlorophyllide reductase (DPOR) that uses Mg-ATP and reduced ferredoxin to reduce ring D of protochlorophyllide (Pchlide) to form chlorophyllide a (Chlide). This reaction is light-independent. The L component serves as a unique electron donor to the NB-component of the complex, and binds Mg-ATP. In Chloroherpeton thalassium (strain ATCC 35110 / GB-78), this protein is Light-independent protochlorophyllide reductase iron-sulfur ATP-binding protein.